Here is a 1311-residue protein sequence, read N- to C-terminus: DENN domain-containing protein 5B (1311 aa).

Residues 53–270 (ATAAGENFDQ…EVPLPASGRS (218 aa)) form the uDENN domain. A compositionally biased stretch (polar residues) spans 154–165 (QAEHNTSAQNCT). The tract at residues 154-201 (QAEHNTSAQNCTSSSSSSSSSSSSSSMDSLSSSLDDVDSPSAHGGRRT) is disordered. Residues 166 to 187 (SSSSSSSSSSSSSSMDSLSSSL) show a composition bias toward low complexity. The region spanning 289-452 (ELPLADFPLA…AVMSLQTSVL (164 aa)) is the cDENN domain. In terms of domain architecture, dDENN spans 454 to 619 (KELKSTSLRE…DNKIMSQWEE (166 aa)). In terms of domain architecture, RUN 1 spans 809–969 (LEENTLIASL…DYFCFTSVFT (161 aa)). The segment at 854–874 (EQQLESPVSNGQERRKTESSV) is disordered. Residues 962–982 (FCFTSVFTTIMIPYRAVIIPI) traverse the membrane as a helical segment. The PLAT domain occupies 973 to 1081 (IPYRAVIIPI…DDGSLERVLI (109 aa)). Residues 1155-1306 (TVLLCGEGGL…FPITLETSLT (152 aa)) enclose the RUN 2 domain.

This sequence belongs to the RAB6IP1 family.

The protein localises to the membrane. Functionally, guanine nucleotide exchange factor (GEF) which may activate the small GTPases Rab. May promote the exchange of GDP to GTP, converting inactive GDP-bound Rab proteins into their active GTP-bound form. In Danio rerio (Zebrafish), this protein is DENN domain-containing protein 5B (dennd5b).